The chain runs to 370 residues: tRNA-specific 2-thiouridylase MnmA (370 aa).

Residues 25–32 (ALSGGVDS) and Leu-51 each bind ATP. Residue Cys-112 is the Nucleophile of the active site. A disulfide bond links Cys-112 and Cys-211. Gly-137 serves as a coordination point for ATP. An interaction with tRNA region spans residues 161–163 (KDQ). The Cysteine persulfide intermediate role is filled by Cys-211. The segment at 316–317 (RY) is interaction with tRNA.

This sequence belongs to the MnmA/TRMU family.

The protein resides in the cytoplasm. It carries out the reaction S-sulfanyl-L-cysteinyl-[protein] + uridine(34) in tRNA + AH2 + ATP = 2-thiouridine(34) in tRNA + L-cysteinyl-[protein] + A + AMP + diphosphate + H(+). Catalyzes the 2-thiolation of uridine at the wobble position (U34) of tRNA, leading to the formation of s(2)U34. This is tRNA-specific 2-thiouridylase MnmA from Synechococcus sp. (strain JA-3-3Ab) (Cyanobacteria bacterium Yellowstone A-Prime).